Reading from the N-terminus, the 313-residue chain is Cytochrome c biogenesis protein CcsA (313 aa).

8 helical membrane passes run isoleucine 9 to leucine 29, glycine 44 to glycine 64, leucine 71 to phenylalanine 91, isoleucine 101 to isoleucine 121, methionine 143 to isoleucine 163, valine 217 to asparagine 237, tryptophan 244 to leucine 264, and alanine 278 to leucine 298.

This sequence belongs to the CcmF/CycK/Ccl1/NrfE/CcsA family. As to quaternary structure, may interact with Ccs1.

The protein localises to the plastid. The protein resides in the chloroplast thylakoid membrane. In terms of biological role, required during biogenesis of c-type cytochromes (cytochrome c6 and cytochrome f) at the step of heme attachment. This Nicotiana tomentosiformis (Tobacco) protein is Cytochrome c biogenesis protein CcsA.